Consider the following 664-residue polypeptide: Prelamin-A/C (664 aa).

The residue at position 1 (M1) is an N-acetylmethionine. Positions 1 to 24 (METPSQRRATRSGAQASSTPLSPT) are disordered. Residues 1–33 (METPSQRRATRSGAQASSTPLSPTRITRLQEKE) form a head region. An interaction with MLIP region spans residues 1 to 130 (METPSQRRAT…TKKEGDLMAA (130 aa)). T3 is subject to Phosphothreonine. S5 bears the Phosphoserine mark. T10 bears the Phosphothreonine mark. Residues S12 and S18 each carry the phosphoserine modification. T19 is subject to Phosphothreonine. At S22 the chain carries Phosphoserine. The IF rod domain maps to 31-387 (EKEDLQELND…KLLEGEEERL (357 aa)). K32 carries the post-translational modification N6-acetyllysine; alternate. At K32 the chain carries N6-succinyllysine; alternate. K32 is covalently cross-linked (Glycyl lysine isopeptide (Lys-Gly) (interchain with G-Cter in SUMO2); alternate). Residues 34–70 (DLQELNDRLAVYIDRVRSLETENAGLRLRITESEEVV) are coil 1A. Residues S51, S66, and S71 each carry the phosphoserine modification. The segment at 71–80 (SREVSGIKSA) is linker 1. K78 and K97 each carry N6-acetyllysine. The interval 81–218 (YEAELGDARK…NIYSEELRET (138 aa)) is coil 1B. K97 is covalently cross-linked (Glycyl lysine isopeptide (Lys-Gly) (interchain with G-Cter in SUMO2)). S107 bears the Phosphoserine mark. K108, K114, K123, K135, K144, and K155 each carry N6-acetyllysine. K171 carries the N6-acetyllysine; alternate modification. K171 bears the N6-succinyllysine; alternate mark. K171 is covalently cross-linked (Glycyl lysine isopeptide (Lys-Gly) (interchain with G-Cter in SUMO2); alternate). Residues K180, K201, and K208 each carry the N6-acetyllysine modification. K201 participates in a covalent cross-link: Glycyl lysine isopeptide (Lys-Gly) (interchain with G-Cter in SUMO2); alternate. Residue K201 forms a Glycyl lysine isopeptide (Lys-Gly) (interchain with G-Cter in SUMO); alternate linkage. K208 participates in a covalent cross-link: Glycyl lysine isopeptide (Lys-Gly) (interchain with G-Cter in SUMO2). At S212 the chain carries Phosphoserine. Glycyl lysine isopeptide (Lys-Gly) (interchain with G-Cter in SUMO2) cross-links involve residues K219 and K233. The segment at 219–242 (KRRHETRLVEIDNGKQREFESRLA) is linker 2. 4 positions are modified to N6-acetyllysine: K233, K260, K265, and K270. The interval 243 to 383 (DALQDLRAQH…HAYRKLLEGE (141 aa)) is coil 2. A Glycyl lysine isopeptide (Lys-Gly) (interchain with G-Cter in SUMO2); alternate cross-link involves residue K260. Residue K270 forms a Glycyl lysine isopeptide (Lys-Gly) (interchain with G-Cter in SUMO2); alternate linkage. Phosphoserine is present on residues S277, S282, S301, and S307. A Glycyl lysine isopeptide (Lys-Gly) (interchain with G-Cter in SUMO2); alternate cross-link involves residue K311. An N6-acetyllysine mark is found at K311, K316, and K341. Glycyl lysine isopeptide (Lys-Gly) (interchain with G-Cter in SUMO2) cross-links involve residues K366 and K378. The disordered stretch occupies residues 384-442 (EERLRLSPSPTSQRSRGRASSHSSQTQSGGSVTKKRKLESSESRSSFSQHARTSGRVAV). The tail stretch occupies residues 384 to 664 (EERLRLSPSP…TQSPQNCSIM (281 aa)). 9 positions are modified to phosphoserine: S390, S392, S395, S398, S403, S404, S406, S407, and S414. Low complexity predominate over residues 403 to 414 (SSHSSQTQSGGS). A Phosphothreonine modification is found at T416. At K417 the chain carries N6-acetyllysine. Glycyl lysine isopeptide (Lys-Gly) (interchain with G-Cter in SUMO2) cross-links involve residues K417 and K420. Positions 417–422 (KKRKLE) match the Nuclear localization signal motif. Phosphoserine is present on residues S423, S426, S429, and S431. The region spanning 428–545 (SSFSQHARTS…EEVAMRKLVR (118 aa)) is the LTD domain. K450 participates in a covalent cross-link: Glycyl lysine isopeptide (Lys-Gly) (interchain with G-Cter in SUMO2); alternate. 2 positions are modified to N6-acetyllysine: K450 and K457. S458 and S463 each carry phosphoserine. Glycyl lysine isopeptide (Lys-Gly) (interchain with G-Cter in SUMO2) cross-links involve residues K470 and K486. Position 486 is an N6-acetyllysine (K486). Phosphothreonine occurs at positions 496 and 505. Phosphoserine occurs at positions 533 and 546. Residue T548 is modified to Phosphothreonine. The segment at 555–577 (DEDGDDLLHHHHGSHGSSSGDPA) is disordered. 2 positions are modified to phosphoserine: S568 and S571. Residue K597 forms a Glycyl lysine isopeptide (Lys-Gly) (interchain with G-Cter in SUMO2); alternate linkage. Residue K597 forms a Glycyl lysine isopeptide (Lys-Gly) (interchain with G-Cter in SUMO1); alternate linkage. The interval 598–620 (ASASSSGAQVGGSISSGSSASSV) is disordered. Residues S612, S613, S616, and S619 each carry the phosphoserine modification. O-linked (GlcNAc) serine glycosylation is found at S625 and S628. A phosphoserine mark is found at S628, S632, and S636. The propeptide at 647–661 (LLGNSRPRTQSPQNC) is removed in Lamin-A/C form. C661 bears the Cysteine methyl ester mark. C661 is lipidated: S-farnesyl cysteine. Positions 662 to 664 (SIM) are cleaved as a propeptide — removed in Prelamin-A/C form and in Lamin-A/C form.

This sequence belongs to the intermediate filament family. Homodimer of lamin A and lamin C. Lamin dimers then assemble into dimeric head-to-tail polymers. Ultimately, two head-to-tail polymers assemble laterally into a protofilament with a uniformly shaped rod of 3.5 nm in diameter. Interacts with lamin-associated polypeptides IA, IB and TMPO-alpha, RB1 and with emerin. Interacts with SREBF1, SREBF2, SUN2 and TMEM43. Interacts with TMEM201. Proteolytically processed isoform A interacts with NARF. Interacts with SUN1. Interacts with MLIP. Interacts with DMPK; may regulate nuclear envelope stability. Interacts with SUV39H1; the interaction increases stability of SUV39H1. Interacts with SYNE2. Interacts with ITSN1 isoform 2. Interacts with IFFO1; enables the formation of an interior nucleoskeleton that is recruited to DNA double-strand breaks. In terms of assembly, interacts with EMD. As to quaternary structure, interacts (via C-terminus) with LEMD2 (via N-terminus) (in vitro). Post-translationally, proteolytic cleavage of the C-terminal of 18 residues of prelamin-A/C results in the production of lamin-A/C. The prelamin-A/C maturation pathway includes farnesylation of CAAX motif by protein farnesyltransferase (FNTA and FNTB), removal of the last three amino acids (-AAX) by RCE1/FACE2 and/or ZMPSTE24, methylation of the C-terminal cysteine by ICMT and endoproteolytic removal of the last 15 C-terminal amino acids by ZMPSTE24. Proteolytic cleavage requires prior farnesylation and methylation, and absence of these blocks cleavage. In terms of processing, farnesylation of prelamin-A/C facilitates nuclear envelope targeting. Phosphorylation plays a key role in lamin organization, subcellular localization and nuclear envelope disintegration. Phosphorylation by CDK1 at Ser-22 and Ser-392 at the onset of mitosis drives lamin disassembly and nuclear envelope breakdown. Phosphorylation at Ser-22 and Ser-392 during interphase promotes localization to the nucleoplasm and regulates lamina assembly. Phosphorylation at Ser-22, Ser-392 and Ser-628 during interphase causes redistribution between the nucleus and the cytoplasm. Phosphorylation at Ser-22 by CDK1 regulates matrix stiffness. Phosphorylation status of Ser-22 determines its localization between double-strand break (DSB) sites and the nuclear matrix. Phosphorylated by ATR at Ser-282 in response to DNA damage, leading to lamin disassembly and nuclear envelope rupture. Phosphorylation also regulates stability in micronuclei arising from genome instability: phosphorylation at Ser-395 by ATR in response to genome instability and double-stranded DNA breaks primes LMNA for subsequent phosphorylation at Ser-392 by CDK1 and micronuclei envelope rupture. The rupture of micronuclear envelope triggers the cGAS-STING pathway thereby activating the type I interferon response and innate immunity. Post-translationally, acetylation by KAT8 is required for nuclear architecture. In terms of processing, sumoylation is necessary for the localization to the nuclear envelope.

The protein localises to the nucleus lamina. The protein resides in the nucleus envelope. It localises to the nucleus. It is found in the nucleoplasm. Its subcellular location is the nucleus matrix. Its function is as follows. Lamins are intermediate filament proteins that assemble into a filamentous meshwork, and which constitute the major components of the nuclear lamina, a fibrous layer on the nucleoplasmic side of the inner nuclear membrane. Lamins provide a framework for the nuclear envelope, bridging the nuclear envelope and chromatin, thereby playing an important role in nuclear assembly, chromatin organization, nuclear membrane and telomere dynamics. Lamin A and C also regulate matrix stiffness by conferring nuclear mechanical properties. The structural integrity of the lamina is strictly controlled by the cell cycle, as seen by the disintegration and formation of the nuclear envelope in prophase and telophase, respectively. Lamin A and C are present in equal amounts in the lamina of mammals. Also invoved in DNA repair: recruited by DNA repair proteins XRCC4 and IFFO1 to the DNA double-strand breaks (DSBs) to prevent chromosome translocation by immobilizing broken DNA ends. Required for normal development of peripheral nervous system and skeletal muscle and for muscle satellite cell proliferation. Required for osteoblastogenesis and bone formation. Also prevents fat infiltration of muscle and bone marrow, helping to maintain the volume and strength of skeletal muscle and bone. Required for cardiac homeostasis. Prelamin-A/C can accelerate smooth muscle cell senescence. It acts to disrupt mitosis and induce DNA damage in vascular smooth muscle cells (VSMCs), leading to mitotic failure, genomic instability, and premature senescence. The sequence is that of Prelamin-A/C (LMNA) from Sus scrofa (Pig).